We begin with the raw amino-acid sequence, 572 residues long: Dihydroxy-acid dehydratase (572 aa).

Aspartate 78 is a Mg(2+) binding site. A [2Fe-2S] cluster-binding site is contributed by cysteine 119. Residues aspartate 120 and lysine 121 each contribute to the Mg(2+) site. Lysine 121 is subject to N6-carboxylysine. Cysteine 192 serves as a coordination point for [2Fe-2S] cluster. Glutamate 459 is a binding site for Mg(2+). The Proton acceptor role is filled by serine 485.

It belongs to the IlvD/Edd family. In terms of assembly, homodimer. [2Fe-2S] cluster is required as a cofactor. Requires Mg(2+) as cofactor.

The enzyme catalyses (2R)-2,3-dihydroxy-3-methylbutanoate = 3-methyl-2-oxobutanoate + H2O. It carries out the reaction (2R,3R)-2,3-dihydroxy-3-methylpentanoate = (S)-3-methyl-2-oxopentanoate + H2O. It participates in amino-acid biosynthesis; L-isoleucine biosynthesis; L-isoleucine from 2-oxobutanoate: step 3/4. It functions in the pathway amino-acid biosynthesis; L-valine biosynthesis; L-valine from pyruvate: step 3/4. Functions in the biosynthesis of branched-chain amino acids. Catalyzes the dehydration of (2R,3R)-2,3-dihydroxy-3-methylpentanoate (2,3-dihydroxy-3-methylvalerate) into 2-oxo-3-methylpentanoate (2-oxo-3-methylvalerate) and of (2R)-2,3-dihydroxy-3-methylbutanoate (2,3-dihydroxyisovalerate) into 2-oxo-3-methylbutanoate (2-oxoisovalerate), the penultimate precursor to L-isoleucine and L-valine, respectively. This Helicobacter hepaticus (strain ATCC 51449 / 3B1) protein is Dihydroxy-acid dehydratase.